Consider the following 209-residue polypeptide: Kynurenine formamidase (209 aa).

Tryptophan 20 is a binding site for substrate. Positions 50, 54, and 56 each coordinate Zn(2+). Histidine 60 serves as the catalytic Proton donor/acceptor. Residues histidine 161 and glutamate 173 each contribute to the Zn(2+) site.

Belongs to the Cyclase 1 superfamily. KynB family. Homodimer. Zn(2+) is required as a cofactor.

The catalysed reaction is N-formyl-L-kynurenine + H2O = L-kynurenine + formate + H(+). It participates in amino-acid degradation; L-tryptophan degradation via kynurenine pathway; L-kynurenine from L-tryptophan: step 2/2. Its function is as follows. Catalyzes the hydrolysis of N-formyl-L-kynurenine to L-kynurenine, the second step in the kynurenine pathway of tryptophan degradation. The polypeptide is Kynurenine formamidase (Bacillus anthracis).